The following is a 164-amino-acid chain: NADH-quinone oxidoreductase subunit C (164 aa).

It belongs to the complex I 30 kDa subunit family. In terms of assembly, NDH-1 is composed of 14 different subunits. Subunits NuoB, C, D, E, F, and G constitute the peripheral sector of the complex.

It is found in the cell inner membrane. It carries out the reaction a quinone + NADH + 5 H(+)(in) = a quinol + NAD(+) + 4 H(+)(out). NDH-1 shuttles electrons from NADH, via FMN and iron-sulfur (Fe-S) centers, to quinones in the respiratory chain. The immediate electron acceptor for the enzyme in this species is believed to be ubiquinone. Couples the redox reaction to proton translocation (for every two electrons transferred, four hydrogen ions are translocated across the cytoplasmic membrane), and thus conserves the redox energy in a proton gradient. The protein is NADH-quinone oxidoreductase subunit C of Geotalea uraniireducens (strain Rf4) (Geobacter uraniireducens).